A 369-amino-acid chain; its full sequence is Type 2 DNA topoisomerase 6 subunit A (369 aa).

Positions 11–149 constitute a Topo IIA-type catalytic domain; it reads QRDLLAREKL…FHMRPEEDGA (139 aa). Y106 acts as the O-(5'-phospho-DNA)-tyrosine intermediate in catalysis. Residues E202 and D254 each coordinate Mg(2+).

The protein belongs to the TOP6A family. As to quaternary structure, homodimer. Heterotetramer of two Top6A and two Top6B chains. Requires Mg(2+) as cofactor.

The enzyme catalyses ATP-dependent breakage, passage and rejoining of double-stranded DNA.. In terms of biological role, relaxes both positive and negative superturns and exhibits a strong decatenase activity. This is Type 2 DNA topoisomerase 6 subunit A from Methanosarcina barkeri (strain Fusaro / DSM 804).